The following is a 284-amino-acid chain: Acetylglutamate kinase (284 aa).

Residues 66 to 67 (GG), Arg-88, and Asn-179 contribute to the substrate site.

This sequence belongs to the acetylglutamate kinase family. ArgB subfamily.

It localises to the cytoplasm. The catalysed reaction is N-acetyl-L-glutamate + ATP = N-acetyl-L-glutamyl 5-phosphate + ADP. Its pathway is amino-acid biosynthesis; L-arginine biosynthesis; N(2)-acetyl-L-ornithine from L-glutamate: step 2/4. Catalyzes the ATP-dependent phosphorylation of N-acetyl-L-glutamate. In Actinobacillus pleuropneumoniae serotype 5b (strain L20), this protein is Acetylglutamate kinase.